Reading from the N-terminus, the 350-residue chain is Transcriptional activator hacA (350 aa).

The interval 1–118 (MKSADRFSPV…RLEMEKLESE (118 aa)) is disordered. Polar residues predominate over residues 35–47 (PADTSLQTKNVVA). 2 stretches are compositionally biased toward basic and acidic residues: residues 81-95 (KTED…ERVL) and 104-118 (SRER…LESE). The region spanning 87–150 (EQRRIERVLR…NRLSQQVAQL (64 aa)) is the bZIP domain. The segment at 89–142 (RRIERVLRNRAAAQTSRERKRLEMEKLESEKIDMEQQNQFLLQRLAQMEAENNR) is basic motif. The leucine-zipper stretch occupies residues 143–150 (LSQQVAQL). 3 disordered regions span residues 152 to 175 (AEVR…PTLT), 194 to 218 (PTPS…DLTQ), and 328 to 350 (SLQP…AGSA). Positions 160–175 (STPTSSSPASVSPTLT) are enriched in low complexity. 2 stretches are compositionally biased toward polar residues: residues 196–211 (PSVT…SSLA) and 329–340 (LQPSHGASTSRC).

This sequence belongs to the bZIP family. In terms of assembly, homodimer.

It is found in the nucleus. Transcriptional activator involved in the unfolded protein response (UPR) pathway. Recognizes and binds to the UPR element (UPRE) in the promoter of UPR-regulated genes. Increases the synthesis of endoplasmic reticulum-resident proteins required for protein folding as well as components of the secretory pathway. The sequence is that of Transcriptional activator hacA (hacA) from Emericella nidulans (strain FGSC A4 / ATCC 38163 / CBS 112.46 / NRRL 194 / M139) (Aspergillus nidulans).